A 568-amino-acid polypeptide reads, in one-letter code: Oxygen-dependent choline dehydrogenase (568 aa).

8–37 (DYIIIGAGSAGNTLAARLTEDAGVTVLLLE) is a binding site for FAD. Histidine 477 serves as the catalytic Proton acceptor.

Belongs to the GMC oxidoreductase family. Requires FAD as cofactor.

The catalysed reaction is choline + A = betaine aldehyde + AH2. The enzyme catalyses betaine aldehyde + NAD(+) + H2O = glycine betaine + NADH + 2 H(+). The protein operates within amine and polyamine biosynthesis; betaine biosynthesis via choline pathway; betaine aldehyde from choline (cytochrome c reductase route): step 1/1. Its function is as follows. Involved in the biosynthesis of the osmoprotectant glycine betaine. Catalyzes the oxidation of choline to betaine aldehyde and betaine aldehyde to glycine betaine at the same rate. The polypeptide is Oxygen-dependent choline dehydrogenase (Pseudomonas syringae pv. syringae (strain B728a)).